The chain runs to 150 residues: D-aminoacyl-tRNA deacylase (150 aa).

The Gly-cisPro motif, important for rejection of L-amino acids signature appears at 136–137; that stretch reads GP.

The protein belongs to the DTD family. As to quaternary structure, homodimer.

The protein resides in the cytoplasm. It catalyses the reaction glycyl-tRNA(Ala) + H2O = tRNA(Ala) + glycine + H(+). The enzyme catalyses a D-aminoacyl-tRNA + H2O = a tRNA + a D-alpha-amino acid + H(+). Functionally, an aminoacyl-tRNA editing enzyme that deacylates mischarged D-aminoacyl-tRNAs. Also deacylates mischarged glycyl-tRNA(Ala), protecting cells against glycine mischarging by AlaRS. Acts via tRNA-based rather than protein-based catalysis; rejects L-amino acids rather than detecting D-amino acids in the active site. By recycling D-aminoacyl-tRNA to D-amino acids and free tRNA molecules, this enzyme counteracts the toxicity associated with the formation of D-aminoacyl-tRNA entities in vivo and helps enforce protein L-homochirality. This chain is D-aminoacyl-tRNA deacylase, found in Staphylococcus carnosus (strain TM300).